Here is a 416-residue protein sequence, read N- to C-terminus: Glutamyl-tRNA reductase (416 aa).

Substrate contacts are provided by residues 49–52 (TCNR), Ser-105, 110–112 (EPQ), and Gln-116. The active-site Nucleophile is the Cys-50. Residue 185 to 190 (GAGEMI) participates in NADP(+) binding.

This sequence belongs to the glutamyl-tRNA reductase family. In terms of assembly, homodimer.

It carries out the reaction (S)-4-amino-5-oxopentanoate + tRNA(Glu) + NADP(+) = L-glutamyl-tRNA(Glu) + NADPH + H(+). It functions in the pathway porphyrin-containing compound metabolism; protoporphyrin-IX biosynthesis; 5-aminolevulinate from L-glutamyl-tRNA(Glu): step 1/2. Catalyzes the NADPH-dependent reduction of glutamyl-tRNA(Glu) to glutamate 1-semialdehyde (GSA). This chain is Glutamyl-tRNA reductase, found in Nitrosomonas europaea (strain ATCC 19718 / CIP 103999 / KCTC 2705 / NBRC 14298).